The following is a 94-amino-acid chain: Sapecin (94 aa).

An N-terminal signal peptide occupies residues 1–23; it reads MKSFIVLAVTLCLAAFFMGQSVA. Residues 24–54 constitute a propeptide that is removed on maturation; that stretch reads SPAAAAEESKFVDGLHALKTIEPELHGRYKR. Disulfide bonds link Cys-57–Cys-84, Cys-70–Cys-90, and Cys-74–Cys-92.

It belongs to the invertebrate defensin family. Type 1 subfamily. As to expression, hemocytes and fat body.

The protein localises to the secreted. Its function is as follows. Sapecins, which are potent bactericidal proteins, are produced in response to injury. Sapecin is cytotoxic to Gram-positive bacteria, and to a lesser extent against Gram-negative bacteria. This chain is Sapecin, found in Sarcophaga peregrina (Flesh fly).